The following is a 402-amino-acid chain: Speedy protein E2B (402 aa).

A disordered region spans residues 1–89; the sequence is MDRTETRFRK…EEPEKELAPE (89 aa). Polar residues predominate over residues 16 to 39; sequence GKITTSRQPHPQNEQSPQRSTSGY. A compositionally biased stretch (acidic residues) spans 76 to 89; that stretch reads DESEEEPEKELAPE.

Belongs to the Speedy/Ringo family.

This chain is Speedy protein E2B (SPDYE2B), found in Homo sapiens (Human).